Consider the following 695-residue polypeptide: Follicle-stimulating hormone receptor (695 aa).

The signal sequence occupies residues 1–17 (MALLLVSLLAFLSLGSG). 2 cysteine pairs are disulfide-bonded: cysteine 18–cysteine 25 and cysteine 23–cysteine 32. Residues 18–46 (CHHRICHCSNRVFLCQESKVTEIPSDLPR) form the LRRNT domain. Topologically, residues 18 to 366 (CHHRICHCSN…EDIMGYNILR (349 aa)) are extracellular. 9 LRR repeats span residues 49 to 72 (IELR…FGDL), 73 to 97 (EKIE…LPKL), 98 to 118 (HEIR…AFQN), 119 to 143 (LPNL…KIHS), 144 to 169 (LQKV…VGLS), 170 to 192 (FESV…AFNG), 193 to 216 (TQLD…VFHG), 217 to 240 (ASGP…GLEN), and 241 to 259 (LKKL…PTLE). 2 N-linked (GlcNAc...) asparagine glycosylation sites follow: asparagine 191 and asparagine 199. 4 disulfides stabilise this stretch: cysteine 275/cysteine 346, cysteine 276/cysteine 292, cysteine 276/cysteine 356, and cysteine 292/cysteine 338. Asparagine 293 and asparagine 318 each carry an N-linked (GlcNAc...) asparagine glycan. The residue at position 335 (tyrosine 335) is a Sulfotyrosine. The helical transmembrane segment at 367–387 (VLIWFISILAITGNIIVLVIL) threads the bilayer. The Cytoplasmic segment spans residues 388-398 (TTSQYKLTVPR). The helical transmembrane segment at 399–421 (FLMCNLAFADLCIGIYLLLIASV) threads the bilayer. Residues 422–443 (DIHTKSQYHNYAIDWQTGAGCD) are Extracellular-facing. Cysteines 442 and 517 form a disulfide. The helical transmembrane segment at 444–465 (AAGFFTVFASELSVYTLTAITL) threads the bilayer. At 466-485 (ERWHTITHAMQLDCKVQLRH) the chain is on the cytoplasmic side. The helical transmembrane segment at 486–508 (AASVMVMGWIFAFAAALFPIFGI) threads the bilayer. Residues 509–528 (SSYMKVSICLPMDIDSPLSQ) lie on the Extracellular side of the membrane. Residues 529-550 (LYVMSLLVLNVLAFVVICGCYI) traverse the membrane as a helical segment. Topologically, residues 551-573 (HIYLTVRNPNIVSSSSDTRIAKR) are cytoplasmic. Residues 574–597 (MAMLIFTDFLCMAPISFFAISASL) form a helical membrane-spanning segment. The Extracellular portion of the chain corresponds to 598–608 (KVPLITVSKAK). A helical membrane pass occupies residues 609–630 (ILLVLFHPINSCANPFLYAIFT). The Cytoplasmic segment spans residues 631–695 (KNFRRDFFIL…LVPLSHLAQN (65 aa)).

The protein belongs to the G-protein coupled receptor 1 family. FSH/LSH/TSH subfamily. Homotrimer. Functions as a homotrimer binding the FSH hormone heterodimer composed of CGA and FSHB. Interacts with ARRB2. Interacts with APPL2; interaction is independent of follicle stimulating hormone stimulation. Post-translationally, sulfated. N-glycosylated; indirectly required for FSH-binding, possibly via a conformational change that allows high affinity binding of hormone. In terms of tissue distribution, sertoli cells and ovarian granulosa cells.

The protein localises to the cell membrane. G protein-coupled receptor for follitropin, the follicle-stimulating hormone. Through cAMP production activates the downstream PI3K-AKT and ERK1/ERK2 signaling pathways. This is Follicle-stimulating hormone receptor (FSHR) from Homo sapiens (Human).